The following is a 562-amino-acid chain: Tryptophan 2-monooxygenase (562 aa).

Residues Ser54, Glu74, Arg76, Arg82, and Arg104 each coordinate FMN. Position 104 (Arg104) interacts with substrate.

Belongs to the tryptophan 2-monooxygenase family. FMN is required as a cofactor.

It carries out the reaction L-tryptophan + O2 = indole-3-acetamide + CO2 + H2O. It functions in the pathway plant hormone metabolism; auxin biosynthesis. The protein is Tryptophan 2-monooxygenase (iaaM) of Pantoea agglomerans pv. gypsophilae (Erwinia herbicola).